A 480-amino-acid chain; its full sequence is Probable ATP-dependent RNA helicase DDX49 (480 aa).

The short motif at 2-30 (AGFAEIGLSSWLVEQCRQLGLKQPTPVQL) is the Q motif element. The region spanning 33-207 (IPAILEGRDC…GLATNEPFFW (175 aa)) is the Helicase ATP-binding domain. 46-53 (AKTGSGKT) is an ATP binding site. The DEAD box motif lies at 152–155 (DEAD). Residues 218-382 (QLDQRYLLVP…ELVVEEAEVL (165 aa)) form the Helicase C-terminal domain. The tract at residues 438-480 (QQNRRFKEKVGQTLRRQKAGSTVRRSRPPRSRPQEPAQAEAQD) is disordered.

The protein belongs to the DEAD box helicase family. DDX49/DBP8 subfamily.

The protein localises to the nucleus. It localises to the nucleolus. The catalysed reaction is ATP + H2O = ADP + phosphate + H(+). Functionally, ATP-dependent RNA helicase that plays a role in various aspects of RNA metabolism including the regulation of mRNA export and the levels of pre-ribosomal RNA. Regulates the stability and synthesis of pre-ribosomal RNA and thereby regulates cell proliferation. Also possesses antiviral activity by recognizing gammaherpesvirus transcripts in the context of lytic reactivation. This chain is Probable ATP-dependent RNA helicase DDX49 (Ddx49), found in Mus musculus (Mouse).